Here is a 132-residue protein sequence, read N- to C-terminus: ATP synthase epsilon chain (132 aa).

This sequence belongs to the ATPase epsilon chain family. As to quaternary structure, F-type ATPases have 2 components, CF(1) - the catalytic core - and CF(0) - the membrane proton channel. CF(1) has five subunits: alpha(3), beta(3), gamma(1), delta(1), epsilon(1). CF(0) has three main subunits: a, b and c.

It localises to the cell inner membrane. Its function is as follows. Produces ATP from ADP in the presence of a proton gradient across the membrane. The protein is ATP synthase epsilon chain of Parvibaculum lavamentivorans (strain DS-1 / DSM 13023 / NCIMB 13966).